Reading from the N-terminus, the 282-residue chain is MPLLFKKIKDLRNFLKNKRCEGKEIGFVPTMGYLHEGHRQLIKLARMQNDIVVVSIFVNPTQFGEGEDYDRYPRDLERDLEICEEEGVDVVFAPEVDEIYPKGYRTKVCVGELGKVLEGEFRPGHFDGVATIVVKLFNIVQPNRAYFGEKDYQQLKIIEQVVEDLNIPVEIVPVPIVREEDGLAYSSRNVYLSPEERESALSIYKSFLLAEKMIKAGERDAKRIKEAIRAFIERHPHVKGVDYVEITDQNLNPKETVEKGDRILVAVRVGNARLIDNWKVQS.

Residue 31 to 38 (MGYLHEGH) coordinates ATP. Catalysis depends on His38, which acts as the Proton donor. Gln62 provides a ligand contact to (R)-pantoate. Residue Gln62 participates in beta-alanine binding. 148–151 (GEKD) is a binding site for ATP. Gln154 contributes to the (R)-pantoate binding site. Residues Val177 and 185–188 (YSSR) contribute to the ATP site.

The protein belongs to the pantothenate synthetase family. As to quaternary structure, homodimer.

It localises to the cytoplasm. The enzyme catalyses (R)-pantoate + beta-alanine + ATP = (R)-pantothenate + AMP + diphosphate + H(+). The protein operates within cofactor biosynthesis; (R)-pantothenate biosynthesis; (R)-pantothenate from (R)-pantoate and beta-alanine: step 1/1. In terms of biological role, catalyzes the condensation of pantoate with beta-alanine in an ATP-dependent reaction via a pantoyl-adenylate intermediate. This is Pantothenate synthetase from Aquifex aeolicus (strain VF5).